A 269-amino-acid polypeptide reads, in one-letter code: Formamidopyrimidine-DNA glycosylase (269 aa).

Residue P2 is the Schiff-base intermediate with DNA of the active site. E3 acts as the Proton donor in catalysis. K57 serves as the catalytic Proton donor; for beta-elimination activity. H90, R109, and R150 together coordinate DNA. The segment at 235–269 adopts an FPG-type zinc-finger fold; it reads QVYGKAGEQCPNCAELIQELKIGQRNTFYCSSCQV. Catalysis depends on R259, which acts as the Proton donor; for delta-elimination activity.

This sequence belongs to the FPG family. In terms of assembly, monomer. It depends on Zn(2+) as a cofactor.

The catalysed reaction is Hydrolysis of DNA containing ring-opened 7-methylguanine residues, releasing 2,6-diamino-4-hydroxy-5-(N-methyl)formamidopyrimidine.. The enzyme catalyses 2'-deoxyribonucleotide-(2'-deoxyribose 5'-phosphate)-2'-deoxyribonucleotide-DNA = a 3'-end 2'-deoxyribonucleotide-(2,3-dehydro-2,3-deoxyribose 5'-phosphate)-DNA + a 5'-end 5'-phospho-2'-deoxyribonucleoside-DNA + H(+). In terms of biological role, involved in base excision repair of DNA damaged by oxidation or by mutagenic agents. Acts as a DNA glycosylase that recognizes and removes damaged bases. Has a preference for oxidized purines, such as 7,8-dihydro-8-oxoguanine (8-oxoG). Has AP (apurinic/apyrimidinic) lyase activity and introduces nicks in the DNA strand. Cleaves the DNA backbone by beta-delta elimination to generate a single-strand break at the site of the removed base with both 3'- and 5'-phosphates. The polypeptide is Formamidopyrimidine-DNA glycosylase (Vibrio atlanticus (strain LGP32) (Vibrio splendidus (strain Mel32))).